Here is a 402-residue protein sequence, read N- to C-terminus: Speedy protein E5 (402 aa).

The disordered stretch occupies residues 1–89 (MDRTETRFRK…EEPEKELAPE (89 aa)). Over residues 16–39 (EKITTSRQPQPQNEQSPQRSTSGY) the composition is skewed to polar residues. Residues 76–89 (DESAEEPEKELAPE) show a composition bias toward acidic residues.

Belongs to the Speedy/Ringo family.

This chain is Speedy protein E5 (SPDYE5), found in Homo sapiens (Human).